The sequence spans 212 residues: Regulatory protein RecX (212 aa).

This sequence belongs to the RecX family.

The protein resides in the cytoplasm. Modulates RecA activity. The polypeptide is Regulatory protein RecX (Clostridium perfringens (strain SM101 / Type A)).